Consider the following 111-residue polypeptide: Photosystem II reaction center Psb28 protein (111 aa).

The protein belongs to the Psb28 family. Part of the photosystem II complex.

It is found in the cellular thylakoid membrane. This Acaryochloris marina (strain MBIC 11017) protein is Photosystem II reaction center Psb28 protein.